The chain runs to 591 residues: Thiol:disulfide interchange protein DsbD 1 (591 aa).

The first 18 residues, 1 to 18, serve as a signal peptide directing secretion; it reads MRRLLTLILLLVALPAGA. The Periplasmic portion of the chain corresponds to 19-175; it reads GLFDSRPGAS…GPLEHKGKRS (157 aa). Intrachain disulfides connect Cys134/Cys140 and Cys191/Cys313. A helical transmembrane segment spans residues 176-196; sequence LLFFFLAGLTLTFTPCVLPML. Residues 197–213 lie on the Cytoplasmic side of the membrane; that stretch reads PILSGVVLRGRPGGGRG. Residues 214 to 234 form a helical membrane-spanning segment; that stretch reads FVLSLAYVLPMALCFALLGAL. The Periplasmic segment spans residues 235–251; that stretch reads MGMFGASLNLQAQLQSP. The chain crosses the membrane as a helical span at residues 252-272; that stretch reads WVLVPFAAFFALFAVAMFGFF. Residues 273–295 lie on the Cytoplasmic side of the membrane; sequence ELRLPGFIREPLDRLAGDARGGS. A helical membrane pass occupies residues 296-316; the sequence is ILGAATLGVLSSLLVSPCVSA. Residues 317-338 lie on the Periplasmic side of the membrane; it reads PLAASLLYISASGDAWGGGLQL. The helical transmembrane segment at 339-359 threads the bilayer; sequence FALGLGMGTPLVVFGAGGGAL. Residues 360–365 are Cytoplasmic-facing; the sequence is LPKSGA. The chain crosses the membrane as a helical span at residues 366–386; that stretch reads WMNGVRNAFGVLLLAVAVWLL. Residues 387-392 are Periplasmic-facing; sequence ERVVSG. The helical transmembrane segment at 393 to 413 threads the bilayer; sequence PVALMLWGMLAGGAGLALGAL. Residues 414–423 are Cytoplasmic-facing; that stretch reads EFTPKSAARR. Residues 424–444 form a helical membrane-spanning segment; it reads LLQLLGLMFLTYAVAAWIGAL. Over 445 to 591 the chain is Periplasmic; the sequence is QGESDPIHPL…ERLRRAATRQ (147 aa). Residues 452–589 form the Thioredoxin domain; sequence HPLGRSVPSI…LAERLRRAAT (138 aa). Cys504 and Cys507 form a disulfide bridge.

It belongs to the thioredoxin family. DsbD subfamily.

It is found in the cell inner membrane. The catalysed reaction is [protein]-dithiol + NAD(+) = [protein]-disulfide + NADH + H(+). The enzyme catalyses [protein]-dithiol + NADP(+) = [protein]-disulfide + NADPH + H(+). In terms of biological role, required to facilitate the formation of correct disulfide bonds in some periplasmic proteins and for the assembly of the periplasmic c-type cytochromes. Acts by transferring electrons from cytoplasmic thioredoxin to the periplasm. This transfer involves a cascade of disulfide bond formation and reduction steps. The sequence is that of Thiol:disulfide interchange protein DsbD 1 from Pseudomonas aeruginosa (strain ATCC 15692 / DSM 22644 / CIP 104116 / JCM 14847 / LMG 12228 / 1C / PRS 101 / PAO1).